The chain runs to 316 residues: Aspartate carbamoyltransferase catalytic subunit (316 aa).

Carbamoyl phosphate-binding residues include arginine 56 and threonine 57. Lysine 84 serves as a coordination point for L-aspartate. Carbamoyl phosphate is bound by residues arginine 106, histidine 139, and glutamine 142. Positions 172 and 226 each coordinate L-aspartate. Residues glycine 267 and proline 268 each contribute to the carbamoyl phosphate site.

It belongs to the aspartate/ornithine carbamoyltransferase superfamily. ATCase family. In terms of assembly, heterododecamer (2C3:3R2) of six catalytic PyrB chains organized as two trimers (C3), and six regulatory PyrI chains organized as three dimers (R2).

It carries out the reaction carbamoyl phosphate + L-aspartate = N-carbamoyl-L-aspartate + phosphate + H(+). It participates in pyrimidine metabolism; UMP biosynthesis via de novo pathway; (S)-dihydroorotate from bicarbonate: step 2/3. Its function is as follows. Catalyzes the condensation of carbamoyl phosphate and aspartate to form carbamoyl aspartate and inorganic phosphate, the committed step in the de novo pyrimidine nucleotide biosynthesis pathway. The protein is Aspartate carbamoyltransferase catalytic subunit of Mycobacterium sp. (strain MCS).